We begin with the raw amino-acid sequence, 468 residues long: MTKTLPKDFIFGGATAAYQAEGATHTDGKGPVAWDKYLEDNYWYTAEPASDFYHKYPVDLELAEEYGVNGIRISIAWSRIFPTGYGEVNEKGVEFYHKLFAECHKRHVEPFVTLHHFDTPEALHSNGDFLNRENIEHFIDYAAFCFEEFPEVNYWTTFNEIGPIGDGQYLVGKFPPGIKYDLAKVFQSHHNMMVSHARAVKLYKDKGYKGEIGVVHALPTKYPYDPENPADVRAAELEDIIHNKFILDATYLGHYSDKTMEGVNHILAENGGELDLRDEDFQALDAAKDLNDFLGINYYMSDWMQAFDGETEIIHNGKGEKGSSKYQIKGVGRRVAPDYVPRTDWDWIIYPEGLYDQIMRVKNDYPNYKKIYITENGLGYKDEFVDNTVYDDGRIDYVKQHLEVLSDAIADGANVKGYFIWSLMDVFSWSNGYEKRYGLFYVDFDTQERYPKKSAHWYKKLAETQVIE.

Q19, H116, N159, E160, and N297 together coordinate D-galactose 6-phosphate. E160 acts as the Proton donor in catalysis. Catalysis depends on E375, which acts as the Nucleophile. D-galactose 6-phosphate is bound by residues S428, W429, K435, and Y437.

The protein belongs to the glycosyl hydrolase 1 family.

It carries out the reaction a 6-phospho-beta-D-galactoside + H2O = D-galactose 6-phosphate + an alcohol. Its pathway is carbohydrate metabolism; lactose degradation; D-galactose 6-phosphate and beta-D-glucose from lactose 6-phosphate: step 1/1. The sequence is that of 6-phospho-beta-galactosidase from Lactococcus lactis subsp. lactis (Streptococcus lactis).